Reading from the N-terminus, the 201-residue chain is uncharacterized protein (201 aa).

Belongs to the phosphatidylethanolamine-binding protein family.

This is an uncharacterized protein from Saccharomyces cerevisiae (strain ATCC 204508 / S288c) (Baker's yeast).